Consider the following 396-residue polypeptide: Elongation factor Tu (396 aa).

The tr-type G domain maps to 10–206 (KPHVNVGTIG…TMDSYIPEPV (197 aa)). The segment at 19 to 26 (GHVDHGKT) is G1. Residue 19-26 (GHVDHGKT) coordinates GTP. Thr26 contributes to the Mg(2+) binding site. Residues 60–64 (GITIS) are G2. The interval 81–84 (DCPG) is G3. Residues 81–85 (DCPGH) and 136–139 (NKAD) each bind GTP. Residues 136-139 (NKAD) form a G4 region. The G5 stretch occupies residues 174–176 (SAL).

Belongs to the TRAFAC class translation factor GTPase superfamily. Classic translation factor GTPase family. EF-Tu/EF-1A subfamily. In terms of assembly, monomer.

Its subcellular location is the cytoplasm. The enzyme catalyses GTP + H2O = GDP + phosphate + H(+). Functionally, GTP hydrolase that promotes the GTP-dependent binding of aminoacyl-tRNA to the A-site of ribosomes during protein biosynthesis. This is Elongation factor Tu from Legionella pneumophila (strain Lens).